A 395-amino-acid chain; its full sequence is Dual specificity mitogen-activated protein kinase kinase 1 (395 aa).

Residues 1-24 are disordered; that stretch reads MPKKKPTPIQLNPNPEGTAVNGTP. Polar residues predominate over residues 9-24; sequence IQLNPNPEGTAVNGTP. Positions 68 to 363 constitute a Protein kinase domain; it reads FEKVSELGAG…LKQLMVHSFI (296 aa). Residues 74-82 and Lys97 contribute to the ATP site; that span reads LGAGNGGVV. Asp190 functions as the Proton acceptor in the catalytic mechanism. 2 positions are modified to phosphoserine; by RAF: Ser218 and Ser222. Residues 284–305 are disordered; the sequence is ASSELAPRPRPPGRPISSYGPD.

This sequence belongs to the protein kinase superfamily. STE Ser/Thr protein kinase family. MAP kinase kinase subfamily. Activated by phosphorylation on Ser/Thr catalyzed by MAP kinase kinase kinases (RAF or MOS). As to expression, expressed in the central nervous system, kidney, liver, intestine and the hematopoietic system.

The protein localises to the cytoplasm. It localises to the cytoskeleton. The protein resides in the microtubule organizing center. It is found in the centrosome. Its subcellular location is the spindle pole body. The protein localises to the nucleus. The catalysed reaction is L-seryl-[protein] + ATP = O-phospho-L-seryl-[protein] + ADP + H(+). It catalyses the reaction L-threonyl-[protein] + ATP = O-phospho-L-threonyl-[protein] + ADP + H(+). It carries out the reaction L-tyrosyl-[protein] + ATP = O-phospho-L-tyrosyl-[protein] + ADP + H(+). Its function is as follows. Dual specificity protein kinase which acts as an essential component of the MAP kinase signal transduction pathway. Binding of extracellular ligands such as growth factors, cytokines and hormones to their cell-surface receptors activates the MAPK/ERK cascade, ultimately leading to phosphorylation of a threonine and a tyrosine residue in a Thr-Glu-Tyr sequence located in MAP kinases. Depending on the cellular context, this pathway mediates diverse biological functions such as cell growth, adhesion, survival and differentiation predominantly through the regulation of transcription, metabolism and cytoskeletal rearrangements. In Xenopus laevis (African clawed frog), this protein is Dual specificity mitogen-activated protein kinase kinase 1 (map2k1).